We begin with the raw amino-acid sequence, 96 residues long: Glutamyl-tRNA(Gln) amidotransferase subunit C (96 aa).

Belongs to the GatC family. As to quaternary structure, heterotrimer of A, B and C subunits.

It catalyses the reaction L-glutamyl-tRNA(Gln) + L-glutamine + ATP + H2O = L-glutaminyl-tRNA(Gln) + L-glutamate + ADP + phosphate + H(+). The catalysed reaction is L-aspartyl-tRNA(Asn) + L-glutamine + ATP + H2O = L-asparaginyl-tRNA(Asn) + L-glutamate + ADP + phosphate + 2 H(+). Allows the formation of correctly charged Asn-tRNA(Asn) or Gln-tRNA(Gln) through the transamidation of misacylated Asp-tRNA(Asn) or Glu-tRNA(Gln) in organisms which lack either or both of asparaginyl-tRNA or glutaminyl-tRNA synthetases. The reaction takes place in the presence of glutamine and ATP through an activated phospho-Asp-tRNA(Asn) or phospho-Glu-tRNA(Gln). This is Glutamyl-tRNA(Gln) amidotransferase subunit C from Neisseria meningitidis serogroup B (strain ATCC BAA-335 / MC58).